The primary structure comprises 161 residues: Nascent polypeptide-associated complex subunit beta (161 aa).

Disordered stretches follow at residues 14 to 41 and 125 to 161; these read LSAN…KDDS and QNAQ…ADVE. An NAC-A/B domain is found at 37 to 102; that stretch reads NKDDSKLQAQ…PQEKSLQDLF (66 aa). Over residues 125–134 the composition is skewed to low complexity; the sequence is QNAQAAAPAT. The segment covering 135-146 has biased composition (basic and acidic residues); it reads EGHEAGEKKDND.

This sequence belongs to the NAC-beta family. As to quaternary structure, part of the nascent polypeptide-associated complex (NAC), consisting of EGD2 and EGD1. NAC associates with ribosomes via EGD1.

It localises to the cytoplasm. It is found in the nucleus. In terms of biological role, component of the nascent polypeptide-associated complex (NAC), a dynamic component of the ribosomal exit tunnel, protecting the emerging polypeptides from interaction with other cytoplasmic proteins to ensure appropriate nascent protein targeting. The NAC complex also promotes mitochondrial protein import by enhancing productive ribosome interactions with the outer mitochondrial membrane and blocks the inappropriate interaction of ribosomes translating non-secretory nascent polypeptides with translocation sites in the membrane of the endoplasmic reticulum. EGD1 may act as a transcription factor that exert a negative effect on the expression of several genes that are transcribed by RNA polymerase II. The polypeptide is Nascent polypeptide-associated complex subunit beta (EGD1) (Eremothecium gossypii (strain ATCC 10895 / CBS 109.51 / FGSC 9923 / NRRL Y-1056) (Yeast)).